We begin with the raw amino-acid sequence, 84 residues long: Large ribosomal subunit protein bL31B (84 aa).

This sequence belongs to the bacterial ribosomal protein bL31 family. Type B subfamily. As to quaternary structure, part of the 50S ribosomal subunit.

This chain is Large ribosomal subunit protein bL31B, found in Rhodococcus opacus (strain B4).